The following is a 794-amino-acid chain: Inactive zinc metalloprotease C354.09c (794 aa).

A disordered region spans residues 1–56; it reads MTDEKHVYVPPPKDPPSYEEVALHSALNNSAPPNDGEQNETSMEEMEIIEPPSEDS. A helical membrane pass occupies residues 91–111; that stretch reads IPFQFLYLAVIATVIILASYY.

Belongs to the peptidase M28 family. M28B subfamily.

The protein localises to the membrane. The protein is Inactive zinc metalloprotease C354.09c of Schizosaccharomyces pombe (strain 972 / ATCC 24843) (Fission yeast).